We begin with the raw amino-acid sequence, 297 residues long: Putative phosphate permease MJ0630 (297 aa).

Helical transmembrane passes span 2–22 (ITIE…LFIL), 45–65 (LLIL…NVGS), 67–87 (VNSL…VMTL), 99–119 (TVII…YVFG), 121–141 (ILLS…ILYS), 154–174 (ITMI…NLGS), 180–200 (VLGT…FLCL), 225–245 (FIAQ…GMPV), and 274–294 (NIIF…FIIN).

Belongs to the inorganic phosphate transporter (PiT) (TC 2.A.20) family.

Its subcellular location is the cell membrane. Potential transporter for phosphate. The sequence is that of Putative phosphate permease MJ0630 from Methanocaldococcus jannaschii (strain ATCC 43067 / DSM 2661 / JAL-1 / JCM 10045 / NBRC 100440) (Methanococcus jannaschii).